The primary structure comprises 257 residues: tRNA (guanine-N(7)-)-methyltransferase (257 aa).

Residues 1 to 58 are disordered; sequence MQPIEQPGTGPDDITPESQDTNTAESAESGAETGHPRRIRSFVRRAGRTSTGQQRAIN. A compositionally biased stretch (polar residues) spans 16-26; sequence PESQDTNTAES. The span at 36–47 shows a compositional bias: basic residues; sequence PRRIRSFVRRAG. 4 residues coordinate S-adenosyl-L-methionine: Glu-89, Glu-114, Asp-141, and Asp-164. Residue Asp-164 is part of the active site. Substrate is bound at residue Lys-168. The segment at 170–175 is interaction with RNA; that stretch reads RHNKRR. Residues Asp-200 and 235-238 contribute to the substrate site; that span reads TKFE.

This sequence belongs to the class I-like SAM-binding methyltransferase superfamily. TrmB family.

It catalyses the reaction guanosine(46) in tRNA + S-adenosyl-L-methionine = N(7)-methylguanosine(46) in tRNA + S-adenosyl-L-homocysteine. Its pathway is tRNA modification; N(7)-methylguanine-tRNA biosynthesis. Its function is as follows. Catalyzes the formation of N(7)-methylguanine at position 46 (m7G46) in tRNA. The chain is tRNA (guanine-N(7)-)-methyltransferase from Ralstonia pickettii (strain 12J).